A 225-amino-acid chain; its full sequence is Cyclin-dependent kinase inhibitor 3 (225 aa).

2 disordered regions span residues 47–94 and 130–169; these read AAAA…QRRR and ERKS…PLSP. Residues 55–67 are compositionally biased toward basic residues; the sequence is CRRRHRRGGRRGC. The span at 71-82 shows a compositional bias: low complexity; it reads GAGSARACGARS. Positions 143 to 153 are enriched in basic and acidic residues; it reads VAAEHAGEHKH.

The protein belongs to the CDI family. ICK/KRP subfamily.

The polypeptide is Cyclin-dependent kinase inhibitor 3 (KRP3) (Oryza sativa subsp. japonica (Rice)).